A 122-amino-acid polypeptide reads, in one-letter code: Large ribosomal subunit protein uL24 (122 aa).

This sequence belongs to the universal ribosomal protein uL24 family. Part of the 50S ribosomal subunit.

Its function is as follows. One of two assembly initiator proteins, it binds directly to the 5'-end of the 23S rRNA, where it nucleates assembly of the 50S subunit. Functionally, one of the proteins that surrounds the polypeptide exit tunnel on the outside of the subunit. This is Large ribosomal subunit protein uL24 from Renibacterium salmoninarum (strain ATCC 33209 / DSM 20767 / JCM 11484 / NBRC 15589 / NCIMB 2235).